The primary structure comprises 273 residues: MTRVEYKHTEIAVKKKLGQNFLTDRNITRKIVAASGAGSQDRILEIGPGFGALTREILEVCPAFTVVEKDRALAAFIRQEYPQLQLIEADFLDIDLERLAAGGPLRVLGNIPYSITTPILFKLLENRRSITSATLMMQHEVAARLVATPSTKEYGILAVQLQTFCDVRYLFKVGRKVFRPQPNVDSAVISMVPKKNVAVEDAQAFSRFVRTAFHQRRKTLYNNLKDAYMLQAVDEGTLKLRAEALSIEKLADLFKLVQPLPAGEPPMKRDGRR.

Asparagine 20, leucine 22, glycine 47, glutamate 68, aspartate 90, and asparagine 110 together coordinate S-adenosyl-L-methionine.

The protein belongs to the class I-like SAM-binding methyltransferase superfamily. rRNA adenine N(6)-methyltransferase family. RsmA subfamily.

It is found in the cytoplasm. The catalysed reaction is adenosine(1518)/adenosine(1519) in 16S rRNA + 4 S-adenosyl-L-methionine = N(6)-dimethyladenosine(1518)/N(6)-dimethyladenosine(1519) in 16S rRNA + 4 S-adenosyl-L-homocysteine + 4 H(+). Functionally, specifically dimethylates two adjacent adenosines (A1518 and A1519) in the loop of a conserved hairpin near the 3'-end of 16S rRNA in the 30S particle. May play a critical role in biogenesis of 30S subunits. The protein is Ribosomal RNA small subunit methyltransferase A of Chlorobium luteolum (strain DSM 273 / BCRC 81028 / 2530) (Pelodictyon luteolum).